We begin with the raw amino-acid sequence, 1439 residues long: DNA-directed RNA polymerase subunit beta' (1439 aa).

Cysteine 70, cysteine 72, cysteine 85, and cysteine 88 together coordinate Zn(2+). Aspartate 504, aspartate 506, and aspartate 508 together coordinate Mg(2+). Cysteine 862, cysteine 936, cysteine 943, and cysteine 946 together coordinate Zn(2+).

Belongs to the RNA polymerase beta' chain family. In terms of assembly, the RNAP catalytic core consists of 2 alpha, 1 beta, 1 beta' and 1 omega subunit. When a sigma factor is associated with the core the holoenzyme is formed, which can initiate transcription. Mg(2+) is required as a cofactor. Zn(2+) serves as cofactor.

It carries out the reaction RNA(n) + a ribonucleoside 5'-triphosphate = RNA(n+1) + diphosphate. DNA-dependent RNA polymerase catalyzes the transcription of DNA into RNA using the four ribonucleoside triphosphates as substrates. This Gluconobacter oxydans (strain 621H) (Gluconobacter suboxydans) protein is DNA-directed RNA polymerase subunit beta'.